The following is a 663-amino-acid chain: UvrABC system protein B (663 aa).

The span at 1 to 10 (MIDKRDDKPF) shows a compositional bias: basic and acidic residues. Residues 1 to 23 (MIDKRDDKPFKLKSKYKPSGDQP) form a disordered region. The Helicase ATP-binding domain maps to 31–418 (DNIEGGEKAQ…TNTIIEQIIR (388 aa)). 44 to 51 (GATGTGKT) serves as a coordination point for ATP. The Beta-hairpin motif lies at 97–120 (YYDYYQPEAYVPSSDTYIEKDSSV). The 163-residue stretch at 435–597 (QMDDLLGEIN…IVPQTIKKDI (163 aa)) folds into the Helicase C-terminal domain. The region spanning 627-662 (KEAINALQKQMQEAAELLDFELAAQMRDLILELKLM) is the UVR domain.

The protein belongs to the UvrB family. As to quaternary structure, forms a heterotetramer with UvrA during the search for lesions. Interacts with UvrC in an incision complex.

Its subcellular location is the cytoplasm. The UvrABC repair system catalyzes the recognition and processing of DNA lesions. A damage recognition complex composed of 2 UvrA and 2 UvrB subunits scans DNA for abnormalities. Upon binding of the UvrA(2)B(2) complex to a putative damaged site, the DNA wraps around one UvrB monomer. DNA wrap is dependent on ATP binding by UvrB and probably causes local melting of the DNA helix, facilitating insertion of UvrB beta-hairpin between the DNA strands. Then UvrB probes one DNA strand for the presence of a lesion. If a lesion is found the UvrA subunits dissociate and the UvrB-DNA preincision complex is formed. This complex is subsequently bound by UvrC and the second UvrB is released. If no lesion is found, the DNA wraps around the other UvrB subunit that will check the other stand for damage. The sequence is that of UvrABC system protein B from Streptococcus pyogenes serotype M18 (strain MGAS8232).